A 185-amino-acid chain; its full sequence is UPF0301 protein HCH_00550 (185 aa).

This sequence belongs to the UPF0301 (AlgH) family.

The sequence is that of UPF0301 protein HCH_00550 from Hahella chejuensis (strain KCTC 2396).